The primary structure comprises 537 residues: CTP synthase (537 aa).

The amidoligase domain stretch occupies residues 1–268 (MSTKYIFVTG…DQIVCDHLKL (268 aa)). S14 is a binding site for CTP. S14 lines the UTP pocket. 15–20 (SIGKGI) serves as a coordination point for ATP. Y55 contacts L-glutamine. An ATP-binding site is contributed by D72. Positions 72 and 142 each coordinate Mg(2+). CTP-binding positions include 149–151 (DIE), 189–194 (KTKPTQ), and K225. UTP is bound by residues 189-194 (KTKPTQ) and K225. Residues 293-536 (RIALVGKYVE…VTAAVEKSSD (244 aa)) enclose the Glutamine amidotransferase type-1 domain. Residue G355 coordinates L-glutamine. The Nucleophile; for glutamine hydrolysis role is filled by C382. Residues 383–386 (LGMQ), E406, and R464 contribute to the L-glutamine site. Residues H509 and E511 contribute to the active site.

This sequence belongs to the CTP synthase family. As to quaternary structure, homotetramer.

It carries out the reaction UTP + L-glutamine + ATP + H2O = CTP + L-glutamate + ADP + phosphate + 2 H(+). The enzyme catalyses L-glutamine + H2O = L-glutamate + NH4(+). It catalyses the reaction UTP + NH4(+) + ATP = CTP + ADP + phosphate + 2 H(+). It participates in pyrimidine metabolism; CTP biosynthesis via de novo pathway; CTP from UDP: step 2/2. Its activity is regulated as follows. Allosterically activated by GTP, when glutamine is the substrate; GTP has no effect on the reaction when ammonia is the substrate. The allosteric effector GTP functions by stabilizing the protein conformation that binds the tetrahedral intermediate(s) formed during glutamine hydrolysis. Inhibited by the product CTP, via allosteric rather than competitive inhibition. Its function is as follows. Catalyzes the ATP-dependent amination of UTP to CTP with either L-glutamine or ammonia as the source of nitrogen. Regulates intracellular CTP levels through interactions with the four ribonucleotide triphosphates. This chain is CTP synthase, found in Streptococcus sanguinis (strain SK36).